A 218-amino-acid chain; its full sequence is 3,4-dihydroxy-2-butanone 4-phosphate synthase (218 aa).

Residues 38–39 (RE), Asp43, 151–155 (RRGHT), and Glu175 contribute to the D-ribulose 5-phosphate site. Glu39 serves as a coordination point for Mg(2+). His154 contacts Mg(2+).

It belongs to the DHBP synthase family. Homodimer. Requires Mg(2+) as cofactor. It depends on Mn(2+) as a cofactor.

It catalyses the reaction D-ribulose 5-phosphate = (2S)-2-hydroxy-3-oxobutyl phosphate + formate + H(+). It participates in cofactor biosynthesis; riboflavin biosynthesis; 2-hydroxy-3-oxobutyl phosphate from D-ribulose 5-phosphate: step 1/1. Functionally, catalyzes the conversion of D-ribulose 5-phosphate to formate and 3,4-dihydroxy-2-butanone 4-phosphate. The polypeptide is 3,4-dihydroxy-2-butanone 4-phosphate synthase (Shewanella frigidimarina (strain NCIMB 400)).